Reading from the N-terminus, the 842-residue chain is Alanine--tRNA ligase (842 aa).

Zn(2+) contacts are provided by H549, H553, C650, and H654.

Belongs to the class-II aminoacyl-tRNA synthetase family. Zn(2+) is required as a cofactor.

Its subcellular location is the cytoplasm. The catalysed reaction is tRNA(Ala) + L-alanine + ATP = L-alanyl-tRNA(Ala) + AMP + diphosphate. Functionally, catalyzes the attachment of alanine to tRNA(Ala) in a two-step reaction: alanine is first activated by ATP to form Ala-AMP and then transferred to the acceptor end of tRNA(Ala). Also edits incorrectly charged Ser-tRNA(Ala) and Gly-tRNA(Ala) via its editing domain. This chain is Alanine--tRNA ligase, found in Campylobacter jejuni subsp. jejuni serotype O:6 (strain 81116 / NCTC 11828).